A 319-amino-acid polypeptide reads, in one-letter code: L-lactate dehydrogenase 2 (319 aa).

Residues Val16, Asp37, Lys42, Tyr68, and 82-83 (GA) each bind NAD(+). 2 residues coordinate substrate: Gln85 and Arg91. NAD(+) contacts are provided by residues Ser104, 121–123 (AAN), and Ser146. Position 123–126 (123–126 (NPVD)) interacts with substrate. 151–154 (DSAR) serves as a coordination point for substrate. His178 (proton acceptor) is an active-site residue. Tyr222 bears the Phosphotyrosine mark. Thr231 is a substrate binding site.

The protein belongs to the LDH/MDH superfamily. LDH family. Homotetramer.

The protein resides in the cytoplasm. It catalyses the reaction (S)-lactate + NAD(+) = pyruvate + NADH + H(+). It participates in fermentation; pyruvate fermentation to lactate; (S)-lactate from pyruvate: step 1/1. In terms of biological role, catalyzes the conversion of lactate to pyruvate (Potential). Contributes to S.aureus growth during nitrosative stress in both aerobically and anaerobically cultured cells, despite playing a secondary role in this resistance mechanism. The chain is L-lactate dehydrogenase 2 from Staphylococcus aureus (strain USA300).